The sequence spans 468 residues: Probable soluble pyridine nucleotide transhydrogenase (468 aa).

33–42 is an FAD binding site; the sequence is ERGRMLGGVC.

Belongs to the class-I pyridine nucleotide-disulfide oxidoreductase family. FAD serves as cofactor.

It localises to the cytoplasm. The catalysed reaction is NAD(+) + NADPH = NADH + NADP(+). Its function is as follows. Conversion of NADPH, generated by peripheral catabolic pathways, to NADH, which can enter the respiratory chain for energy generation. The chain is Probable soluble pyridine nucleotide transhydrogenase (sthA) from Mycobacterium bovis (strain ATCC BAA-935 / AF2122/97).